Consider the following 580-residue polypeptide: 3-(3-hydroxy-phenyl)propionate/3-hydroxycinnamic acid hydroxylase (580 aa).

Residues 14-43 and 291-301 contribute to the FAD site; these read DVLV…VVEE and FRRGRLLLAGD.

Belongs to the PheA/TfdB FAD monooxygenase family. FAD serves as cofactor.

It carries out the reaction 3-(3-hydroxyphenyl)propanoate + NADH + O2 + H(+) = 3-(2,3-dihydroxyphenyl)propanoate + NAD(+) + H2O. The enzyme catalyses (2E)-3-(3-hydroxyphenyl)prop-2-enoate + NADH + O2 + H(+) = (2E)-3-(2,3-dihydroxyphenyl)prop-2-enoate + NAD(+) + H2O. The protein operates within aromatic compound metabolism; 3-phenylpropanoate degradation. Its function is as follows. Catalyzes the insertion of one atom of molecular oxygen into position 2 of the phenyl ring of 3-(3-hydroxyphenyl)propionate (3-HPP) and hydroxycinnamic acid (3HCI). The polypeptide is 3-(3-hydroxy-phenyl)propionate/3-hydroxycinnamic acid hydroxylase (Mycobacterium avium (strain 104)).